Here is a 1058-residue protein sequence, read N- to C-terminus: MPKRTDIQKIMVIGSGPIIIGQAAEFDYAGTQACLSLKEEGYEVVLVNSNPATIMTDKEIADKVYIEPITLEFVTRILRKEGPDALLPTLGGQTGLNMAMELSKNGILDELGVELLGTKLSAIDQAEDRDLFKQLMEELEQPIPESEIVNTVEEAVAFAATIGYPVIVRPAFTLGGTGGGMCANEKELREITENGLKLSPVTQCLIERSIAGFKEIEYEVMRDSADNALVVCNMENFDPVGIHTGDSIVFAPAQTMSDYENQMLRDASLSIIRALKIEGGCNVQLALDPNSFKYYVIEVNPRVSRSSALASKATGYPIAKLAAKIAVGLTLDEVINPVTGSTYAMFEPALDYVVAKIPRFPFDKFEKGERRLGTQMKATGEVMAIGRNIEESLLKACRSLEIGVHHNEIPELAAVSDDTLIEKVVKAQDDRLFYVSEAIRRGYTPEEIAELTKIDIFYLDKLLHIFEIEQELGAHPQDLEVLKTAKLNGFSDRKIAELWGTTDDKVRQLRLENKIVPVYKMVDTCAAEFDSETPYFYSTYGWENESIKSDKESVLVLGSGPIRIGQGVEFDYATVHSVKAIQAAGYEAIIMNSNPETVSTDFSVSDKLYFEPLTFEDVMNVIDLEQPKGVIVQFGGQTAINLAEPLAKAGVTILGTQVADLDRAEDRDLFEQALKELDIPQPPGQTATNEEEAALAARKIGFPVLVRPSYVLGGRAMEIVENEEDLRSYMRTAVKASPDHPVLVDSYIVGQECEVDAISDGKNVLIPGIMEHIERAGVHSGDSMAVYPPQTLSQKVQETIADYTKRLAIGLHCLGMMNIQFVIKDEKVYVIEVNPRASRTVPFLSKVTNIPMAQVATKLILGQSLSELGYQNGLYPESTRVHIKAPVFSFTKLAKVDSLLGPEMKSTGEVMGSDATLEKALYKAFEASYLHLPTFGNVVFTIADDAKEEALNLARRFQNIGYGILATEGTAAFFASHGLQAQPVGKIGDDDKDIPSFVRKGRIQAIINTVGTKRTADEDGEQIRRSAIEHGVPLFTALDTANAMLKVLESRSFVTEAI.

The interval 1–401 (MPKRTDIQKI…SLLKACRSLE (401 aa)) is carboxyphosphate synthetic domain. Residues R129, R169, G175, G176, R208, I210, E215, G241, I242, H243, Q284, and E298 each coordinate ATP. Residues 133–327 (KQLMEELEQP…IAKLAAKIAV (195 aa)) form the ATP-grasp 1 domain. 3 residues coordinate Mg(2+): Q284, E298, and N300. Residues Q284, E298, and N300 each contribute to the Mn(2+) site. The segment at 402–546 (IGVHHNEIPE…YSTYGWENES (145 aa)) is oligomerization domain. Residues 547 to 929 (IKSDKESVLV…ALYKAFEASY (383 aa)) form a carbamoyl phosphate synthetic domain region. Positions 671 to 861 (EQALKELDIP…MAQVATKLIL (191 aa)) constitute an ATP-grasp 2 domain. ATP is bound by residues R707, S746, I748, E752, G777, V778, H779, S780, Q820, and E832. Positions 820, 832, and 834 each coordinate Mg(2+). Q820, E832, and N834 together coordinate Mn(2+). The MGS-like domain occupies 930–1058 (LHLPTFGNVV…ESRSFVTEAI (129 aa)). Residues 930–1058 (LHLPTFGNVV…ESRSFVTEAI (129 aa)) are allosteric domain.

Belongs to the CarB family. As to quaternary structure, composed of two chains; the small (or glutamine) chain promotes the hydrolysis of glutamine to ammonia, which is used by the large (or ammonia) chain to synthesize carbamoyl phosphate. Tetramer of heterodimers (alpha,beta)4. It depends on Mg(2+) as a cofactor. The cofactor is Mn(2+).

It catalyses the reaction hydrogencarbonate + L-glutamine + 2 ATP + H2O = carbamoyl phosphate + L-glutamate + 2 ADP + phosphate + 2 H(+). It carries out the reaction hydrogencarbonate + NH4(+) + 2 ATP = carbamoyl phosphate + 2 ADP + phosphate + 2 H(+). It functions in the pathway amino-acid biosynthesis; L-arginine biosynthesis; carbamoyl phosphate from bicarbonate: step 1/1. The protein operates within pyrimidine metabolism; UMP biosynthesis via de novo pathway; (S)-dihydroorotate from bicarbonate: step 1/3. In terms of biological role, large subunit of the glutamine-dependent carbamoyl phosphate synthetase (CPSase). CPSase catalyzes the formation of carbamoyl phosphate from the ammonia moiety of glutamine, carbonate, and phosphate donated by ATP, constituting the first step of 2 biosynthetic pathways, one leading to arginine and/or urea and the other to pyrimidine nucleotides. The large subunit (synthetase) binds the substrates ammonia (free or transferred from glutamine from the small subunit), hydrogencarbonate and ATP and carries out an ATP-coupled ligase reaction, activating hydrogencarbonate by forming carboxy phosphate which reacts with ammonia to form carbamoyl phosphate. This chain is Carbamoyl phosphate synthase large chain, found in Streptococcus pneumoniae (strain ATCC 700669 / Spain 23F-1).